The sequence spans 185 residues: Peptidyl-tRNA hydrolase (185 aa).

Y14 is a tRNA binding site. Residue H19 is the Proton acceptor of the active site. The tRNA site is built by Y65, N67, and N113.

This sequence belongs to the PTH family. In terms of assembly, monomer.

The protein resides in the cytoplasm. It catalyses the reaction an N-acyl-L-alpha-aminoacyl-tRNA + H2O = an N-acyl-L-amino acid + a tRNA + H(+). In terms of biological role, hydrolyzes ribosome-free peptidyl-tRNAs (with 1 or more amino acids incorporated), which drop off the ribosome during protein synthesis, or as a result of ribosome stalling. Functionally, catalyzes the release of premature peptidyl moieties from peptidyl-tRNA molecules trapped in stalled 50S ribosomal subunits, and thus maintains levels of free tRNAs and 50S ribosomes. The sequence is that of Peptidyl-tRNA hydrolase from Rickettsia felis (strain ATCC VR-1525 / URRWXCal2) (Rickettsia azadi).